Here is a 96-residue protein sequence, read N- to C-terminus: Large ribosomal subunit protein eL21 (96 aa).

The interval 1–37 (MPSSNGPMTGTRDKLSNSPRERGMSPPQRAIQEYDEG) is disordered. Over residues 11–23 (TRDKLSNSPRERG) the composition is skewed to basic and acidic residues.

Belongs to the eukaryotic ribosomal protein eL21 family.

The polypeptide is Large ribosomal subunit protein eL21 (Haloquadratum walsbyi (strain DSM 16790 / HBSQ001)).